The sequence spans 859 residues: Leucine--tRNA ligase (859 aa).

The short motif at 42-52 (PYPSGRLHMGH) is the 'HIGH' region element. Positions 618 to 622 (KMSKS) match the 'KMSKS' region motif. Position 621 (Lys621) interacts with ATP.

This sequence belongs to the class-I aminoacyl-tRNA synthetase family.

The protein resides in the cytoplasm. The enzyme catalyses tRNA(Leu) + L-leucine + ATP = L-leucyl-tRNA(Leu) + AMP + diphosphate. This is Leucine--tRNA ligase from Shewanella sp. (strain MR-4).